A 360-amino-acid chain; its full sequence is Phospho-N-acetylmuramoyl-pentapeptide-transferase (360 aa).

10 consecutive transmembrane segments (helical) span residues 25–45 (RTIYASLTALVISFVLGPWLI), 73–93 (TMGGVLIMSAVMFSTLLWADL), 94–114 (TNAYVWIALGVTFGFGLIGFV), 134–154 (FCLQVVVAGIAGTVLVYGLNG), 173–193 (PGYVLFAILVMVGASNAVNLT), 198–218 (GLAIVPVAIAAGTYMIFAYVA), 240–260 (VFCGALVGAGLGFLWYNAYPA), 262–282 (IFMGDVGSLPLGGALGVVAIL), 287–307 (LALVIVGGLFVMEAVSVILQV), and 337–357 (KVIVRFWIIAIMLALLSVSTL).

It belongs to the glycosyltransferase 4 family. MraY subfamily. The cofactor is Mg(2+).

Its subcellular location is the cell inner membrane. It catalyses the reaction UDP-N-acetyl-alpha-D-muramoyl-L-alanyl-gamma-D-glutamyl-meso-2,6-diaminopimeloyl-D-alanyl-D-alanine + di-trans,octa-cis-undecaprenyl phosphate = di-trans,octa-cis-undecaprenyl diphospho-N-acetyl-alpha-D-muramoyl-L-alanyl-D-glutamyl-meso-2,6-diaminopimeloyl-D-alanyl-D-alanine + UMP. It participates in cell wall biogenesis; peptidoglycan biosynthesis. In terms of biological role, catalyzes the initial step of the lipid cycle reactions in the biosynthesis of the cell wall peptidoglycan: transfers peptidoglycan precursor phospho-MurNAc-pentapeptide from UDP-MurNAc-pentapeptide onto the lipid carrier undecaprenyl phosphate, yielding undecaprenyl-pyrophosphoryl-MurNAc-pentapeptide, known as lipid I. The sequence is that of Phospho-N-acetylmuramoyl-pentapeptide-transferase from Desulfatibacillum aliphaticivorans.